The sequence spans 213 residues: Kynurenine formamidase (213 aa).

W18 provides a ligand contact to substrate. Zn(2+) is bound by residues H48, H52, and D54. The Proton donor/acceptor role is filled by H58. Zn(2+) contacts are provided by H160 and E172.

It belongs to the Cyclase 1 superfamily. KynB family. As to quaternary structure, homodimer. It depends on Zn(2+) as a cofactor.

It catalyses the reaction N-formyl-L-kynurenine + H2O = L-kynurenine + formate + H(+). It participates in amino-acid degradation; L-tryptophan degradation via kynurenine pathway; L-kynurenine from L-tryptophan: step 2/2. Its function is as follows. Catalyzes the hydrolysis of N-formyl-L-kynurenine to L-kynurenine, the second step in the kynurenine pathway of tryptophan degradation. The sequence is that of Kynurenine formamidase from Burkholderia orbicola (strain MC0-3).